We begin with the raw amino-acid sequence, 514 residues long: 2,3-bisphosphoglycerate-independent phosphoglycerate mutase (514 aa).

Mn(2+)-binding residues include D14 and S64. Catalysis depends on S64, which acts as the Phosphoserine intermediate. Residues H125, 155–156 (RD), R187, R193, 263–266 (RADR), and K336 contribute to the substrate site. Residues D403, H407, D444, H445, and H463 each contribute to the Mn(2+) site.

The protein belongs to the BPG-independent phosphoglycerate mutase family. In terms of assembly, monomer. The cofactor is Mn(2+).

It catalyses the reaction (2R)-2-phosphoglycerate = (2R)-3-phosphoglycerate. It functions in the pathway carbohydrate degradation; glycolysis; pyruvate from D-glyceraldehyde 3-phosphate: step 3/5. In terms of biological role, catalyzes the interconversion of 2-phosphoglycerate and 3-phosphoglycerate. The protein is 2,3-bisphosphoglycerate-independent phosphoglycerate mutase of Escherichia coli O1:K1 / APEC.